We begin with the raw amino-acid sequence, 125 residues long: MARVKRGTTTRAKHNRILDQAKGYYGRRKNTIRIARQAVEKAGQYAYRDRKVKKRSFRALWIQRINAAVRAEGLTYGVFMYGLKLAGLDLDRKVLADLAMNESAAFGAIIAQVKSALPEGARVAA.

Belongs to the bacterial ribosomal protein bL20 family.

Its function is as follows. Binds directly to 23S ribosomal RNA and is necessary for the in vitro assembly process of the 50S ribosomal subunit. It is not involved in the protein synthesizing functions of that subunit. This is Large ribosomal subunit protein bL20 from Zymomonas mobilis subsp. mobilis (strain ATCC 31821 / ZM4 / CP4).